The chain runs to 441 residues: Xylose isomerase 1 (441 aa).

Active-site residues include H105 and D108. Positions 236, 272, 275, 300, 311, 313, and 343 each coordinate Mg(2+).

It belongs to the xylose isomerase family. Homotetramer. Mg(2+) serves as cofactor.

The protein resides in the cytoplasm. The catalysed reaction is alpha-D-xylose = alpha-D-xylulofuranose. This Xanthomonas axonopodis pv. citri (strain 306) protein is Xylose isomerase 1 (xylA1).